The chain runs to 765 residues: E3 ubiquitin-protein ligase SlrP (765 aa).

The interval 1 to 451 (MFNITNIQST…VDYQGPRVLF (451 aa)) is interaction with target proteins. LRR repeat units follow at residues 200–219 (QITTLILDNNELKSLPENLQ), 221–242 (NIKTLYANSNQLTSIPATLPDT), 243–262 (IQEMELSINRITELPERLPS), 263–284 (ALQSLDLFHNKISCLPENLPEE), 285–305 (LRYLSVYDNSIRTLPAHLPSG), 306–325 (ITHLNVQSNSLTALPETLPP), 326–346 (GLKTLEAGENALTSLPASLPP), 347–368 (ELQVLDVSKNQITVLPETLPPT), 369–389 (ITTLDVSRNALTNLPENLPAA), and 390–410 (LQIMQASRNNLVRLPESLPHF). The tract at residues 452–461 (AMGDFSIVRV) is linker. Residues 462–765 (TRPLHQAVQG…VSSLMSAYWR (304 aa)) form an E3 ubiquitin-protein ligase catalytic domain region. An NEL domain is found at 464 to 758 (PLHQAVQGWL…NILLKKEVSS (295 aa)). Catalysis depends on cysteine 546, which acts as the Glycyl thioester intermediate.

It belongs to the LRR-containing bacterial E3 ligase family. Interacts with host TXN. Ubiquitinated in the presence of host E1 ubiquitin-activating enzyme, E2 ubiquitin-conjugating enzyme and ubiquitin.

Its subcellular location is the secreted. The protein resides in the host cytoplasm. It catalyses the reaction S-ubiquitinyl-[E2 ubiquitin-conjugating enzyme]-L-cysteine + [acceptor protein]-L-lysine = [E2 ubiquitin-conjugating enzyme]-L-cysteine + N(6)-ubiquitinyl-[acceptor protein]-L-lysine.. With respect to regulation, binding to TXN is inhibited by hydrogen peroxide in vitro. Functionally, effector proteins function to alter host cell physiology and promote bacterial survival in host tissues. This protein is an E3 ubiquitin ligase that interferes with host's ubiquitination pathway. Can ubiquitinate both ubiquitin and host TXN (thioredoxin). Leads to significant decrease of thioredoxin activity and increase of host cell death. This Salmonella typhimurium (strain LT2 / SGSC1412 / ATCC 700720) protein is E3 ubiquitin-protein ligase SlrP (slrP).